A 331-amino-acid polypeptide reads, in one-letter code: Putative ankyrin repeat protein FPV012 (331 aa).

ANK repeat units follow at residues 11–40 (DGYTSLYKETAKGNIKKVVELLYKGVNPNT), 44–73 (DSYTPLHIAAKTGNIKIIRRLIRYGANVDK), 77–106 (DGYTALLIAICTGDIKTCNVLLDEGANPNY), and 110–139 (YGITPLVRIISYYRPTILKLLMDRGANCNQ).

In Vertebrata (FPV), this protein is Putative ankyrin repeat protein FPV012.